A 944-amino-acid chain; its full sequence is E3 ubiquitin-protein ligase JMJ24 (944 aa).

Disordered stretches follow at residues 20–40 (QTRS…GIPD) and 77–103 (ANSA…YSEG). The WRC domain maps to 38-83 (IPDDLRCKRSDGKQWRCTAMSMADKTVCEKHYIQAKKRAANSAFRA). Positions 73–80 (KKRAANSA) match the Nuclear localization signal 1 motif. A PHD-type; atypical zinc finger spans residues 217-269 (GEICHQCQRKDRERIISCLKCNQRAFCHNCLSARYSEISLEEVEKVCPACRGL). Cysteine 220, cysteine 223, cysteine 234, cysteine 237, cysteine 243, cysteine 246, cysteine 263, and cysteine 266 together coordinate Zn(2+). A Nuclear localization signal 2 motif is present at residues 323 to 330 (EKRLREVE). The JmjC domain maps to 621–873 (PRLGLLNVAA…ESARLAEEIR (253 aa)). Basic and acidic residues predominate over residues 685–703 (ERVRKTKPVPEEPDQKMSE). A disordered region spans residues 685–715 (ERVRKTKPVPEEPDQKMSENESLLSPEQKLR).

The protein belongs to the JARID1 histone demethylase family. Homodimer. Interacts with RDR2. Binds to CMT3. Associates with the E2 ubiquitin-conjugating enzyme UBC10. Self-ubiquitinates. As to expression, expressed in inflorescences, flowers, roots, siliques, leaves and stems, especially in the vasculature (mainly phloem), with highest levels in floral organs.

Its subcellular location is the nucleus. The enzyme catalyses S-ubiquitinyl-[E2 ubiquitin-conjugating enzyme]-L-cysteine + [acceptor protein]-L-lysine = [E2 ubiquitin-conjugating enzyme]-L-cysteine + N(6)-ubiquitinyl-[acceptor protein]-L-lysine.. Binds histone H3 but seems to have lost demethylase activity probably due to its inability to bind iron Fe(2+). Possesses E3 ubiquitin ligase activity and targets directly CMT3 for proteasomal degradation to initiate destabilization of the heterochromatic state (e.g. CHG cytosine methylation and H3K9me2) of endogenous silenced loci. Required for the removal of repressive H3K9me2 histone marks to facilitate the transcription of AtSN1, AtMu1c, solo LTR and SDC, thus counteracting their transcriptional silencing. Mainly required to promote the basal level transcription of silenced loci such as TE and repeats targeted by RNA-dependent DNA methylation (RdDM) for silencing, a specialized branch of the RNA interference (RNAi) pathway. Also cooperates with RNAi pathways for gene silencing both by contributing to the production of 24-nt siRNA to initiate RdDM and by recruiting RDR2 to enable local transcripts to make dsRNA. Antagonizes histone H3K9 demethylase IBM1/JMJ25 function. The protein is E3 ubiquitin-protein ligase JMJ24 of Arabidopsis thaliana (Mouse-ear cress).